Reading from the N-terminus, the 450-residue chain is C4-dicarboxylate transport protein (450 aa).

8 helical membrane-spanning segments follow: residues 25–45 (VVFAIIIGVLLGHFQPEYGAA), 56–76 (LIKMIIAPVIFLTIVTGIASM), 90–110 (MAYFLTFSTLALVVGLVVANV), 162–182 (ILQVLLVAVLFGVSLAMVGDA), 200–220 (LVNIVMKAAPIGAFGAMAFTI), 234–254 (LVLTFYITSAVFVLVVLGAVA), 319–339 (IYMTLAALFIAQATDTHLTLG), and 367–387 (AATLAVVPEVPVAGMALILGV).

It belongs to the dicarboxylate/amino acid:cation symporter (DAACS) (TC 2.A.23) family.

The protein localises to the cell inner membrane. In terms of biological role, responsible for the transport of dicarboxylates such as succinate, fumarate, and malate from the periplasm across the membrane. This Acidovorax sp. (strain JS42) protein is C4-dicarboxylate transport protein.